A 680-amino-acid chain; its full sequence is Lipase 1 (680 aa).

The N-terminal stretch at 1–34 (MKSQNKYSIRKFSVGASSILIATLLFLSGGQAQA) is a signal peptide. The propeptide occupies 35-290 (AEKQVNMGNS…AKAKGDQTNK (256 aa)). Disordered stretches follow at residues 39–58 (VNMG…GDQQ) and 82–260 (KNLH…KNGL). Polar residues predominate over residues 40–58 (NMGNSQEDTVTAQSIGDQQ). A compositionally biased stretch (basic and acidic residues) spans 84–112 (LHNDKTISEENHRKTDDLNKDQLKDDKKS). 2 stretches are compositionally biased toward polar residues: residues 162 to 193 (SQDL…SQRE) and 204 to 223 (QPQQ…FNNE). Over residues 224 to 234 (QEVKPQKDEKT) the composition is skewed to basic and acidic residues. Positions 235–246 (LSVSDLKNNQKS) are enriched in polar residues. Ser-408 acts as the Nucleophile in catalysis. Catalysis depends on Asp-600, which acts as the Charge relay system. Asp-638 lines the Ca(2+) pocket. The Charge relay system role is filled by His-639. Positions 641, 646, and 649 each coordinate Ca(2+).

The protein belongs to the AB hydrolase superfamily. Lipase family.

It is found in the secreted. It carries out the reaction a triacylglycerol + H2O = a diacylglycerol + a fatty acid + H(+). This is Lipase 1 (lip1) from Staphylococcus aureus (strain MRSA252).